We begin with the raw amino-acid sequence, 539 residues long: E3 ubiquitin-protein ligase arc-1 (539 aa).

An RING-type zinc finger spans residues 6–53 (CNVCNEEYSARDPLKCPRVLTGCGHTICHNCAISIAGRNSSIFCPFDR). The B box-type zinc finger occupies 103–149 (LLNLECDEDSEHVAVIYCTVCDSNLCERCSESTHSTNVLSKHRRIPL). The segment at 369–539 (ESRVVLLGLD…LSRLNGTCPV (171 aa)) is ARF-like. GTP contacts are provided by residues 376 to 383 (GLDGAGKT), 422 to 426 (DVGGL), and 481 to 484 (NRKD).

This sequence in the C-terminal section; belongs to the small GTPase superfamily. Arf family.

The enzyme catalyses S-ubiquitinyl-[E2 ubiquitin-conjugating enzyme]-L-cysteine + [acceptor protein]-L-lysine = [E2 ubiquitin-conjugating enzyme]-L-cysteine + N(6)-ubiquitinyl-[acceptor protein]-L-lysine.. It participates in protein modification; protein ubiquitination. Acts as an E3 ubiquitin-protein ligase. The chain is E3 ubiquitin-protein ligase arc-1 (arc-1) from Caenorhabditis elegans.